Here is a 272-residue protein sequence, read N- to C-terminus: Phosphate import ATP-binding protein PstB (272 aa).

The ABC transporter domain occupies 26–267; sequence LDIKNLDLYY…PSEKQTEDYI (242 aa). An ATP-binding site is contributed by 58–65; the sequence is GPSGCGKS.

The protein belongs to the ABC transporter superfamily. Phosphate importer (TC 3.A.1.7) family. As to quaternary structure, the complex is composed of two ATP-binding proteins (PstB), two transmembrane proteins (PstC and PstA) and a solute-binding protein (PstS).

It localises to the cell inner membrane. The catalysed reaction is phosphate(out) + ATP + H2O = ADP + 2 phosphate(in) + H(+). Part of the ABC transporter complex PstSACB involved in phosphate import. Responsible for energy coupling to the transport system. This is Phosphate import ATP-binding protein PstB from Idiomarina loihiensis (strain ATCC BAA-735 / DSM 15497 / L2-TR).